A 504-amino-acid chain; its full sequence is Immunoglobulin-binding protein EibC (504 aa).

An N-terminal signal peptide occupies residues 1–26; the sequence is MSKKFTMTLLSSSLAGLLVMSGGVSA. Positions 27–413 are surface exposed passenger domain; it reads QEEKYTVPYA…IAANTRTLQQ (387 aa). The Extracellular portion of the chain corresponds to 27–453; sequence QEEKYTVPYA…GLFQPYSVGK (427 aa). Positions 154-280 are head domain; the sequence is DAKASGEFSV…TGTESDKTYG (127 aa). Residues 281-296 are neck; sequence TRVLGGLSDGTRNSDA. Positions 297 to 342 are right-handed coiled-coil (RHcc); sequence ATVGQLNRKVGGVYDDVKARITVESEKQKKYTDQKTSEVNEKVEAR. Residues 343–368 form a saddle domain region; that stretch reads TTVGVDSDGKLTRAEGATKTIAVNDG. Residues 369 to 434 form a left-handed coiled-coil (LHcc) region; the sequence is LVALSGRTDR…INENHKEMKR (66 aa). Positions 411–438 form a coiled coil; that stretch reads LQQHSARLDSQQRQINENHKEMKRAAAQ. An outer membrane translocation of the passenger domain region spans residues 411-453; that stretch reads LQQHSARLDSQQRQINENHKEMKRAAAQSAALTGLFQPYSVGK. Beta stranded transmembrane passes span 454-464, 467-478, 481-490, and 494-504; these read FNATAAVGGYS, QALAVGVGYRFN, TAAKAGVAFS, and ASWNVGVNFEF. Residues 454-504 form a translocator domain region; sequence FNATAAVGGYSDQQALAVGVGYRFNEQTAAKAGVAFSDGDASWNVGVNFEF.

Belongs to the autotransporter-2 (AT-2) (TC 1.B.40) family. Eib subfamily. As to quaternary structure, homotrimer; can probably form mixed heterotrimers in vivo. Will form mixed heterotrimers with EibD; these are correctly located in the outer membrane and bind IgG Fc, although less well than homotrimers. In denaturing gels runs as a band of about 200 kDa. Binds the Fc portion of immunoglobulins; binds more than 1 Fc per subunit.

The protein localises to the cell surface. Its subcellular location is the cell outer membrane. Binds (in a non-immune fashion) to the Fc portion of human IgG and less well to IgA; binding occurs on the cell surface. Confers the ability to survive exposure to human serum exposure. Binds to the Fc portion of human IgG and IgA and to whole mouse antibodies also via Fc. The sequence is that of Immunoglobulin-binding protein EibC from Escherichia coli.